Consider the following 70-residue polypeptide: Cytochrome c oxidase subunit 8B, mitochondrial (70 aa).

The transit peptide at M1–H24 directs the protein to the mitochondrion. Residues I25–S35 lie on the Mitochondrial matrix side of the membrane. A helical membrane pass occupies residues P36–Y59. Topologically, residues H60 to A70 are mitochondrial intermembrane.

This sequence belongs to the cytochrome c oxidase VIII family. In terms of assembly, component of the cytochrome c oxidase (complex IV, CIV), a multisubunit enzyme composed of 14 subunits. The complex is composed of a catalytic core of 3 subunits MT-CO1, MT-CO2 and MT-CO3, encoded in the mitochondrial DNA, and 11 supernumerary subunits COX4I1 (or COX4I2), COX5A, COX5B, COX6A2 (or COX6A1), COX6B1 (or COX6B2), COX6C, COX7A1 (or COX7A2), COX7B, COX7C, COX8B and NDUFA4, which are encoded in the nuclear genome. The complex exists as a monomer or a dimer and forms supercomplexes (SCs) in the inner mitochondrial membrane with NADH-ubiquinone oxidoreductase (complex I, CI) and ubiquinol-cytochrome c oxidoreductase (cytochrome b-c1 complex, complex III, CIII), resulting in different assemblies (supercomplex SCI(1)III(2)IV(1) and megacomplex MCI(2)III(2)IV(2)).

Its subcellular location is the mitochondrion inner membrane. It functions in the pathway energy metabolism; oxidative phosphorylation. Component of the cytochrome c oxidase, the last enzyme in the mitochondrial electron transport chain which drives oxidative phosphorylation. The respiratory chain contains 3 multisubunit complexes succinate dehydrogenase (complex II, CII), ubiquinol-cytochrome c oxidoreductase (cytochrome b-c1 complex, complex III, CIII) and cytochrome c oxidase (complex IV, CIV), that cooperate to transfer electrons derived from NADH and succinate to molecular oxygen, creating an electrochemical gradient over the inner membrane that drives transmembrane transport and the ATP synthase. Cytochrome c oxidase is the component of the respiratory chain that catalyzes the reduction of oxygen to water. Electrons originating from reduced cytochrome c in the intermembrane space (IMS) are transferred via the dinuclear copper A center (CU(A)) of subunit 2 and heme A of subunit 1 to the active site in subunit 1, a binuclear center (BNC) formed by heme A3 and copper B (CU(B)). The BNC reduces molecular oxygen to 2 water molecules using 4 electrons from cytochrome c in the IMS and 4 protons from the mitochondrial matrix. The polypeptide is Cytochrome c oxidase subunit 8B, mitochondrial (COX8B) (Bos taurus (Bovine)).